Reading from the N-terminus, the 577-residue chain is Arginine--tRNA ligase (577 aa).

Residues P122 to H132 carry the 'HIGH' region motif.

It belongs to the class-I aminoacyl-tRNA synthetase family. As to quaternary structure, monomer.

The protein resides in the cytoplasm. It carries out the reaction tRNA(Arg) + L-arginine + ATP = L-arginyl-tRNA(Arg) + AMP + diphosphate. The polypeptide is Arginine--tRNA ligase (Escherichia coli O1:K1 / APEC).